The chain runs to 273 residues: Dermonecrotic toxin LspiSicTox-betaIE1i (273 aa).

Mg(2+)-binding residues include Glu-25 and Asp-27. The active-site Nucleophile is His-41. Residues Cys-45 and Cys-51 are joined by a disulfide bond. Asp-85 provides a ligand contact to Mg(2+).

Belongs to the arthropod phospholipase D family. Class I subfamily. Mg(2+) is required as a cofactor. Expressed by the venom gland.

The protein resides in the secreted. It carries out the reaction an N-(acyl)-sphingosylphosphocholine = an N-(acyl)-sphingosyl-1,3-cyclic phosphate + choline. It catalyses the reaction an N-(acyl)-sphingosylphosphoethanolamine = an N-(acyl)-sphingosyl-1,3-cyclic phosphate + ethanolamine. The catalysed reaction is a 1-acyl-sn-glycero-3-phosphocholine = a 1-acyl-sn-glycero-2,3-cyclic phosphate + choline. The enzyme catalyses a 1-acyl-sn-glycero-3-phosphoethanolamine = a 1-acyl-sn-glycero-2,3-cyclic phosphate + ethanolamine. In terms of biological role, dermonecrotic toxins cleave the phosphodiester linkage between the phosphate and headgroup of certain phospholipids (sphingolipid and lysolipid substrates), forming an alcohol (often choline) and a cyclic phosphate. This toxin acts on sphingomyelin (SM). It may also act on ceramide phosphoethanolamine (CPE), lysophosphatidylcholine (LPC) and lysophosphatidylethanolamine (LPE), but not on lysophosphatidylserine (LPS), and lysophosphatidylglycerol (LPG). It acts by transphosphatidylation, releasing exclusively cyclic phosphate products as second products. Induces dermonecrosis, hemolysis, increased vascular permeability, edema, inflammatory response, and platelet aggregation. This is Dermonecrotic toxin LspiSicTox-betaIE1i from Loxosceles spinulosa (Recluse spider).